A 340-amino-acid chain; its full sequence is Glyceraldehyde-3-phosphate dehydrogenase 2 (340 aa).

Residues 12–13, R78, and T120 contribute to the NADP(+) site; that span reads RI. D-glyceraldehyde 3-phosphate contacts are provided by residues 151 to 153 and T182; that span reads SCT. C152 (nucleophile) is an active-site residue. Position 183 (N183) interacts with NADP(+). D-glyceraldehyde 3-phosphate contacts are provided by residues R197, 210–211, and R233; that span reads TG. Residue N315 participates in NADP(+) binding.

Belongs to the glyceraldehyde-3-phosphate dehydrogenase family. Homotetramer. Interacts with BrxC. Post-translationally, in response to oxidative stress, the active site Cys likely reacts with bacillithiol (BSH) to form mixed disulfides to protect the Cys residue against overoxidation. S-bacillithiolation presumably leads to loss of catalytic activity. Debacillithiolation by monothiol bacilliredoxin BrxC restores the activity.

The protein localises to the cytoplasm. It carries out the reaction D-glyceraldehyde 3-phosphate + phosphate + NADP(+) = (2R)-3-phospho-glyceroyl phosphate + NADPH + H(+). The enzyme catalyses D-glyceraldehyde 3-phosphate + phosphate + NAD(+) = (2R)-3-phospho-glyceroyl phosphate + NADH + H(+). The protein operates within carbohydrate biosynthesis; gluconeogenesis. Functionally, involved in the gluconeogenesis. Catalyzes the oxidative phosphorylation of glyceraldehyde 3-phosphate (G3P) to 1,3-bisphosphoglycerate (BPG) using the cofactor NADP. The first reaction step involves the formation of a hemiacetal intermediate between G3P and a cysteine residue, and this hemiacetal intermediate is then oxidized to a thioester, with concomitant reduction of NADP to NADPH. The reduced NADPH is then exchanged with the second NADP, and the thioester is attacked by a nucleophilic inorganic phosphate to produce BPG. The polypeptide is Glyceraldehyde-3-phosphate dehydrogenase 2 (Bacillus subtilis (strain 168)).